The primary structure comprises 244 residues: Large ribosomal subunit protein uL2 (244 aa).

2 stretches are compositionally biased toward basic residues: residues 1–12 (MGKRPLVRRRGR) and 234–244 (KTGRARIKERK). Disordered regions lie at residues 1-30 (MGKR…TKAN) and 203-244 (HGGG…KERK).

This sequence belongs to the universal ribosomal protein uL2 family. Part of the 50S ribosomal subunit. Forms a bridge to the 30S subunit in the 70S ribosome.

In terms of biological role, one of the primary rRNA binding proteins. Required for association of the 30S and 50S subunits to form the 70S ribosome, for tRNA binding and peptide bond formation. It has been suggested to have peptidyltransferase activity; this is somewhat controversial. Makes several contacts with the 16S rRNA in the 70S ribosome. The sequence is that of Large ribosomal subunit protein uL2 from Nitrosopumilus maritimus (strain SCM1).